The chain runs to 256 residues: Stanniocalcin (256 aa).

An N-terminal signal peptide occupies residues 1 to 18 (MLAKFGLCAVFLVLGTAA). Residues 19-33 (TFDTDPEEASPRRAR) constitute a propeptide that is removed on maturation. Asn-62 carries N-linked (GlcNAc...) asparagine glycosylation. A disordered region spans residues 204–241 (QGSNQGPNSAPAGWRWPMGSPPSFKIQPSMRGRDPTHL).

It belongs to the stanniocalcin family. As to quaternary structure, homodimer; disulfide-linked. In terms of tissue distribution, produced and secreted by the corpuscles of Stannius.

The protein resides in the secreted. Its function is as follows. Its primary function is the prevention of hypercalcemia. Upon release into the circulation, it lowers calcium transport by the gills, thereby reducing its rate of influx from the environment into the extracellular compartment. STC also stimulates phosphate reabsorption by renal proximal tubules. The consequence of this action is increased levels of plasma phosphate, which combines with excess calcium and promotes its disposal into bone and scales. This chain is Stanniocalcin (stc), found in Oncorhynchus mykiss (Rainbow trout).